The chain runs to 102 residues: ATP-dependent Clp protease adapter protein ClpS (102 aa).

This sequence belongs to the ClpS family. Binds to the N-terminal domain of the chaperone ClpA.

Involved in the modulation of the specificity of the ClpAP-mediated ATP-dependent protein degradation. This is ATP-dependent Clp protease adapter protein ClpS from Aromatoleum aromaticum (strain DSM 19018 / LMG 30748 / EbN1) (Azoarcus sp. (strain EbN1)).